A 151-amino-acid chain; its full sequence is Linear element protein Mug20 (151 aa).

The stretch at 56 to 140 (EEKLRALDKL…CAMEKLKMIE (85 aa)) forms a coiled coil.

In terms of assembly, component of linear elements (LinEs), which are similar to synaptonemal complexes, at least composed of rec27, rec25, rec10 and mug20. Interacts with rec10.

Its subcellular location is the cytoplasm. It localises to the nucleus. The protein resides in the chromosome. Functionally, during meiotic DNA recombination, binds to and may help activate DNA double-strand break (DSB) hotspot sites. This Schizosaccharomyces pombe (strain 972 / ATCC 24843) (Fission yeast) protein is Linear element protein Mug20.